The primary structure comprises 226 residues: Lipoprotein-releasing system ATP-binding protein LolD (226 aa).

The region spanning 6 to 226 (LSVEQVSKSF…QLQQGSLIRI (221 aa)) is the ABC transporter domain. 42–49 (GESGCGKS) contacts ATP.

Belongs to the ABC transporter superfamily. Lipoprotein translocase (TC 3.A.1.125) family. The complex is composed of two ATP-binding proteins (LolD) and two transmembrane proteins (LolC and LolE).

It is found in the cell inner membrane. In terms of biological role, part of the ABC transporter complex LolCDE involved in the translocation of mature outer membrane-directed lipoproteins, from the inner membrane to the periplasmic chaperone, LolA. Responsible for the formation of the LolA-lipoprotein complex in an ATP-dependent manner. The sequence is that of Lipoprotein-releasing system ATP-binding protein LolD from Treponema pallidum (strain Nichols).